The sequence spans 103 residues: uncharacterized protein (103 aa).

Positions 1-22 are cleaved as a signal peptide; the sequence is MFRPFLNSLMLGSLFFPFIAIA.

To the N-terminal of the FimA/PapA family of fimbria proteins.

This is an uncharacterized protein from Escherichia coli (strain K12).